A 414-amino-acid polypeptide reads, in one-letter code: Putative competence-damage inducible protein (414 aa).

It belongs to the CinA family.

In Listeria monocytogenes serotype 4a (strain HCC23), this protein is Putative competence-damage inducible protein.